The primary structure comprises 329 residues: Delta-aminolevulinic acid dehydratase (329 aa).

Zn(2+) is bound by residues cysteine 122, cysteine 124, and cysteine 132. Lysine 199 (schiff-base intermediate with substrate) is an active-site residue. 5-aminolevulinate contacts are provided by arginine 209 and arginine 221. Lysine 252 acts as the Schiff-base intermediate with substrate in catalysis. Positions 279 and 318 each coordinate 5-aminolevulinate.

This sequence belongs to the ALAD family. As to quaternary structure, homooctamer. Requires Zn(2+) as cofactor.

It catalyses the reaction 2 5-aminolevulinate = porphobilinogen + 2 H2O + H(+). Its pathway is porphyrin-containing compound metabolism; protoporphyrin-IX biosynthesis; coproporphyrinogen-III from 5-aminolevulinate: step 1/4. In terms of biological role, catalyzes an early step in the biosynthesis of tetrapyrroles. Binds two molecules of 5-aminolevulinate per subunit, each at a distinct site, and catalyzes their condensation to form porphobilinogen. This Schizosaccharomyces pombe (strain 972 / ATCC 24843) (Fission yeast) protein is Delta-aminolevulinic acid dehydratase (hem2).